A 116-amino-acid chain; its full sequence is Ribosome-binding factor A (116 aa).

This sequence belongs to the RbfA family. As to quaternary structure, monomer. Binds 30S ribosomal subunits, but not 50S ribosomal subunits or 70S ribosomes.

It localises to the cytoplasm. In terms of biological role, one of several proteins that assist in the late maturation steps of the functional core of the 30S ribosomal subunit. Associates with free 30S ribosomal subunits (but not with 30S subunits that are part of 70S ribosomes or polysomes). Required for efficient processing of 16S rRNA. May interact with the 5'-terminal helix region of 16S rRNA. This is Ribosome-binding factor A from Mycoplasma pneumoniae (strain ATCC 29342 / M129 / Subtype 1) (Mycoplasmoides pneumoniae).